Reading from the N-terminus, the 586-residue chain is Urease subunit alpha (586 aa).

A Urease domain is found at 134–586 (GAIDTHIHFI…LPMAQRYFLF (453 aa)). Ni(2+) contacts are provided by H139, H141, and K222. K222 bears the N6-carboxylysine mark. Residue H224 participates in substrate binding. H251 and H277 together coordinate Ni(2+). Residue H325 is the Proton donor of the active site. D365 contacts Ni(2+).

It belongs to the metallo-dependent hydrolases superfamily. Urease alpha subunit family. Heterotrimer of UreA (gamma), UreB (beta) and UreC (alpha) subunits. Three heterotrimers associate to form the active enzyme. The cofactor is Ni cation. Post-translationally, carboxylation allows a single lysine to coordinate two nickel ions.

It localises to the cytoplasm. It carries out the reaction urea + 2 H2O + H(+) = hydrogencarbonate + 2 NH4(+). The protein operates within nitrogen metabolism; urea degradation; CO(2) and NH(3) from urea (urease route): step 1/1. The polypeptide is Urease subunit alpha (Gloeothece citriformis (strain PCC 7424) (Cyanothece sp. (strain PCC 7424))).